We begin with the raw amino-acid sequence, 594 residues long: Neuronal PAS domain-containing protein 1 (594 aa).

The 54-residue stretch at 45–98 (QRKEKSRNAARWRRGKENLEFFELAKLLPLPGAISSQLDKASIVRLSVTYLRLR) folds into the bHLH domain. Positions 135-205 (EQHLGGHILQ…EQLGLRAASI (71 aa)) constitute a PAS 1 domain. Residues 206–237 (GPPTPPSVSSSSSSSSSSLVDTPEIEASPTEA) form a disordered region. Residues 212-223 (SVSSSSSSSSSS) show a composition bias toward low complexity. The PAS 2 domain maps to 294–360 (APLAELPLHG…IRQSHLDLLD (67 aa)). The PAC domain occupies 366–409 (TGYYRWLQRAGGFVWLQSVATVAGNGKSTGEHHVLWVSHVLSNA). The interval 427–498 (QEEPSRPGPE…DPPAPPRPEF (72 aa)) is disordered. Basic and acidic residues predominate over residues 453 to 480 (DQDKDKDPQARGKRIKVEASPKEARGSE).

Efficient DNA binding requires dimerization with another bHLH protein. Interacts with ARNT; forms a heterodimer that binds core DNA sequence 5'-[AG]CGTG-3' within the hypoxia response element (HRE) leading to a transcriptional repressor on its target gene TH. As to expression, expressed in brain in inhibitory interneurons. Also found in spinal cord.

Its subcellular location is the nucleus. Functionally, may control regulatory pathways relevant to schizophrenia and to psychotic illness. May play a role in late central nervous system development by modulating EPO expression in response to cellular oxygen level. Forms a heterodimer that binds core DNA sequence 5'-TACGTG-3' within the hypoxia response element (HRE) leading to transcriptional repression on its target gene TH. The sequence is that of Neuronal PAS domain-containing protein 1 (Npas1) from Mus musculus (Mouse).